Consider the following 670-residue polypeptide: Oxidoreductase PigB (670 aa).

The N-terminal stretch at 1-19 (MIIQRLFGILYMLAGLAKA) is a signal peptide. A run of 4 helical transmembrane segments spans residues 53-73 (GDVI…ILML), 76-96 (LWTT…VVIL), 98-118 (QSQP…LYML), and 238-258 (LVFF…VGFI).

Belongs to the flavin monoamine oxidase family. FAD serves as cofactor.

The protein resides in the membrane. It functions in the pathway antibiotic biosynthesis; prodigiosin biosynthesis. Involved in the biosynthesis of 2-methyl-3-n-amyl-pyrrole (MAP), one of the terminal products involved in the biosynthesis of the red antibiotic prodigiosin (Pig). Catalyzes the oxidation of dihydro form of MAP (H2MAP) to yield MAP. This is Oxidoreductase PigB from Serratia sp. (strain ATCC 39006) (Prodigiosinella confusarubida).